A 122-amino-acid chain; its full sequence is Iron-sulfur cluster assembly protein SufA (122 aa).

Residues cysteine 50, cysteine 114, and cysteine 116 each coordinate [2Fe-2S] cluster. 3 residues coordinate [4Fe-4S] cluster: cysteine 50, cysteine 114, and cysteine 116.

The protein belongs to the HesB/IscA family. In terms of assembly, homodimer. Interacts with SufB and SufC.

Functionally, member of gene cluster sufABCDSE that mediates iron-sulfur cluster assembly under oxidative stress and iron limitation conditions. Binds [2Fe-2S] and [4Fe-4S] clusters by mobilizing sulfur atoms provided by the SufS-SufE cysteine desulfurase system and then transfers the assembled Fe-S clusters to target proteins including ferredoxin and aconitase. Seems to act as a Fe-S cluster carrier rather than a scaffold, this role being performed by SufB and SufC. The sequence is that of Iron-sulfur cluster assembly protein SufA (sufA) from Escherichia coli (strain K12).